The following is a 394-amino-acid chain: Actin-related protein 2 (394 aa).

The residue at position 1 (M1) is an N-acetylmethionine. ATP-binding positions include G160 to G162 and R214 to E218. N6-acetyllysine is present on K299. Residue G305 to Y310 participates in ATP binding. K322 bears the N6-acetyllysine mark.

Belongs to the actin family. ARP2 subfamily. Component of the Arp2/3 complex composed of ACTR2/ARP2, ACTR3/ARP3, ARPC1B/p41-ARC, ARPC2/p34-ARC, ARPC3/p21-ARC, ARPC4/p20-ARC and ARPC5/p16-ARC. Interacts with AVIL.

It is found in the cytoplasm. Its subcellular location is the cytoskeleton. It localises to the cell projection. The protein resides in the nucleus. ATP-binding component of the Arp2/3 complex, a multiprotein complex that mediates actin polymerization upon stimulation by nucleation-promoting factor (NPF). The Arp2/3 complex mediates the formation of branched actin networks in the cytoplasm, providing the force for cell motility. Seems to contact the pointed end of the daughter actin filament. In podocytes, required for the formation of lamellipodia downstream of AVIL and PLCE1 regulation. In addition to its role in the cytoplasmic cytoskeleton, the Arp2/3 complex also promotes actin polymerization in the nucleus, thereby regulating gene transcription and repair of damaged DNA. The Arp2/3 complex promotes homologous recombination (HR) repair in response to DNA damage by promoting nuclear actin polymerization, leading to drive motility of double-strand breaks (DSBs). The polypeptide is Actin-related protein 2 (ACTR2) (Pongo abelii (Sumatran orangutan)).